A 239-amino-acid polypeptide reads, in one-letter code: Pyridoxine 5'-phosphate synthase (239 aa).

Asn9 is a 3-amino-2-oxopropyl phosphate binding site. Position 11 to 12 (11 to 12) interacts with 1-deoxy-D-xylulose 5-phosphate; sequence DH. Arg20 contributes to the 3-amino-2-oxopropyl phosphate binding site. His45 acts as the Proton acceptor in catalysis. The 1-deoxy-D-xylulose 5-phosphate site is built by Arg47 and His52. Residue Glu72 is the Proton acceptor of the active site. Thr102 provides a ligand contact to 1-deoxy-D-xylulose 5-phosphate. Catalysis depends on His189, which acts as the Proton donor. 3-amino-2-oxopropyl phosphate-binding positions include Gly190 and 211–212; that span reads GH.

The protein belongs to the PNP synthase family. Homooctamer; tetramer of dimers.

The protein resides in the cytoplasm. The enzyme catalyses 3-amino-2-oxopropyl phosphate + 1-deoxy-D-xylulose 5-phosphate = pyridoxine 5'-phosphate + phosphate + 2 H2O + H(+). Its pathway is cofactor biosynthesis; pyridoxine 5'-phosphate biosynthesis; pyridoxine 5'-phosphate from D-erythrose 4-phosphate: step 5/5. Its function is as follows. Catalyzes the complicated ring closure reaction between the two acyclic compounds 1-deoxy-D-xylulose-5-phosphate (DXP) and 3-amino-2-oxopropyl phosphate (1-amino-acetone-3-phosphate or AAP) to form pyridoxine 5'-phosphate (PNP) and inorganic phosphate. The protein is Pyridoxine 5'-phosphate synthase of Ehrlichia chaffeensis (strain ATCC CRL-10679 / Arkansas).